Reading from the N-terminus, the 29-residue chain is Cyclotide cter-N (29 aa).

The segment at residues 1 to 29 (GSAFCGETCVLGTCYTPDCSCTALVCLKN) is a cross-link (cyclopeptide (Gly-Asn)). 3 cysteine pairs are disulfide-bonded: Cys-5–Cys-19, Cys-9–Cys-21, and Cys-14–Cys-26.

Post-translationally, this is a cyclic peptide.

The protein localises to the secreted. Probably participates in a plant defense mechanism. The chain is Cyclotide cter-N from Clitoria ternatea (Butterfly pea).